Reading from the N-terminus, the 416-residue chain is Enterobactin exporter EntS (416 aa).

Over 1–21 (MNKQSWLLNLSLLKTHPAFRA) the chain is Cytoplasmic. Residues 22-42 (VFLARFISIVSLGLLGVAVPV) form a helical membrane-spanning segment. Residues 43 to 55 (QIQMMTHSTWQVG) lie on the Periplasmic side of the membrane. A helical membrane pass occupies residues 56–76 (LSVTLTGGAMFVGLMVGGVLA). At 77 to 83 (DRYERKK) the chain is on the cytoplasmic side. The chain crosses the membrane as a helical span at residues 84–104 (VILLARGTCGIGFIGLCLNAL). Over 105 to 109 (LPEPS) the chain is Periplasmic. The chain crosses the membrane as a helical span at residues 110 to 130 (LLAIYLLGLWDGFFASLGVTA). Residues 131–156 (LLAATPALVGRENLMQAGAITMLTVR) are Cytoplasmic-facing. Residues 157 to 177 (LGSVISPMIGGLLLATGGVAW) form a helical membrane-spanning segment. Residue Asn-178 is a topological domain, periplasmic. The chain crosses the membrane as a helical span at residues 179 to 199 (YGLAAAGTFITLLPLLSLPAL). The Cytoplasmic portion of the chain corresponds to 200 to 218 (PPPPQPREHPLKSLLAGFR). A helical membrane pass occupies residues 219 to 239 (FLLASPLVGGIALLGGLLTMA). Over 240–256 (SAVRVLYPALADNWQMS) the chain is Periplasmic. Residues 257–277 (AAQIGFLYAAIPLGAAIGALT) form a helical membrane-spanning segment. The Cytoplasmic segment spans residues 278 to 287 (SGKLAHSARP). A helical membrane pass occupies residues 288–307 (GLLMLLSTLGSFLAIGLFGL). The Periplasmic segment spans residues 308 to 313 (MPMWIL). A helical membrane pass occupies residues 314–336 (GVVCLALFGWLSAVSSLLQYTML). Residues 337–356 (QTQTPEAMLGRINGLWTAQN) lie on the Cytoplasmic side of the membrane. A helical transmembrane segment spans residues 357 to 377 (VTGDAIGAALLGGLGAMMTPV). Residue Ala-378 is a topological domain, periplasmic. Residues 379–399 (SASASGFGLLIIGVLLLLVLV) form a helical membrane-spanning segment. Residues 400–416 (ELRRFRQTPPQVTASDG) are Cytoplasmic-facing.

The protein belongs to the major facilitator superfamily. EntS (TC 2.A.1.38) family.

Its subcellular location is the cell inner membrane. Functionally, component of an export pathway for enterobactin. This chain is Enterobactin exporter EntS, found in Escherichia coli O157:H7.